Consider the following 137-residue polypeptide: Ribosome-binding factor A (137 aa).

The tract at residues 110 to 137 is disordered; the sequence is RIQQEKEGATDDRDQNDSGEDATPHSND. Basic and acidic residues predominate over residues 112 to 125; it reads QQEKEGATDDRDQN.

This sequence belongs to the RbfA family. As to quaternary structure, monomer. Binds 30S ribosomal subunits, but not 50S ribosomal subunits or 70S ribosomes.

The protein resides in the cytoplasm. Functionally, one of several proteins that assist in the late maturation steps of the functional core of the 30S ribosomal subunit. Associates with free 30S ribosomal subunits (but not with 30S subunits that are part of 70S ribosomes or polysomes). Required for efficient processing of 16S rRNA. May interact with the 5'-terminal helix region of 16S rRNA. This Rhodopirellula baltica (strain DSM 10527 / NCIMB 13988 / SH1) protein is Ribosome-binding factor A.